We begin with the raw amino-acid sequence, 295 residues long: Probable endonuclease lcl3 (295 aa).

Positions Met1–Ser35 are disordered. Basic and acidic residues predominate over residues Ala17–Ala27. Residues Phe52–Ile74 traverse the membrane as a helical segment. The TNase-like domain occupies Arg96–Asp263. Residue Arg147 is part of the active site. Asp152 provides a ligand contact to Ca(2+). Residues Glu155 and Arg195 contribute to the active site.

This sequence belongs to the LCL3 family.

It is found in the mitochondrion. The protein localises to the membrane. The sequence is that of Probable endonuclease lcl3 (lcl3) from Neosartorya fischeri (strain ATCC 1020 / DSM 3700 / CBS 544.65 / FGSC A1164 / JCM 1740 / NRRL 181 / WB 181) (Aspergillus fischerianus).